Consider the following 247-residue polypeptide: MAAEADGPLKRLLVPILLPEKCYDQLFVQWDLLHVPCLKILLSKGLGLGIVAGSLLVKLPQVFKILGAKSAEGLSLQSVMLELVALTGTMVYSITNNFPFSSWGEALFLMLQTITICFLVMHYRGQTVKGVAFLACYGLVLLVLLSPLTPLTVVTLLQASNVPAVVVGRLLQAATNYHNGHTGQLSAITVFLLFGGSLARIFTSIQETGDPLMAGTFVVSSLCNGLIAAQLLFYWNAKPPHKQKKAQ.

At A2 the chain carries N-acetylalanine. Helical transmembrane passes span 37–57 (CLKILLSKGLGLGIVAGSLLV), 74–94 (LSLQSVMLELVALTGTMVYSI), 100–120 (FSSWGEALFLMLQTITICFLV), 128–145 (VKGVAFLACYGLVLLVLL), 151–171 (LTVVTLLQASNVPAVVVGRLL), 185–205 (LSAITVFLLFGGSLARIFTSI), and 213–233 (MAGTFVVSSLCNGLIAAQLLF). The PQ-loop 1 domain maps to 39–105 (KILLSKGLGL…NNFPFSSWGE (67 aa)). A PQ-loop 2 domain is found at 159-216 (ASNVPAVVVGRLLQAATNYHNGHTGQLSAITVFLLFGGSLARIFTSIQETGDPLMAGT).

This sequence belongs to the MPDU1 (TC 2.A.43.3) family.

The protein localises to the membrane. In terms of biological role, required for normal utilization of mannose-dolichol phosphate (Dol-P-Man) in the synthesis of N-linked and O-linked oligosaccharides and GPI anchors. The protein is Mannose-P-dolichol utilization defect 1 protein (MPDU1) of Homo sapiens (Human).